We begin with the raw amino-acid sequence, 88 residues long: Putative cancer susceptibility gene HEPN1 protein (88 aa).

Expressed in liver. Expression is either down-regulated or lost in hepatocellular carcinomas (HCC).

It is found in the cytoplasm. This is Putative cancer susceptibility gene HEPN1 protein (HEPN1) from Homo sapiens (Human).